The following is a 94-amino-acid chain: Integration host factor subunit beta (94 aa).

This sequence belongs to the bacterial histone-like protein family. As to quaternary structure, heterodimer of an alpha and a beta chain.

Functionally, this protein is one of the two subunits of integration host factor, a specific DNA-binding protein that functions in genetic recombination as well as in transcriptional and translational control. The chain is Integration host factor subunit beta from Citrobacter koseri (strain ATCC BAA-895 / CDC 4225-83 / SGSC4696).